We begin with the raw amino-acid sequence, 355 residues long: UDP-N-acetylglucosamine--N-acetylmuramyl-(pentapeptide) pyrophosphoryl-undecaprenol N-acetylglucosamine transferase (355 aa).

Residues 13-15 (TGG), Asn-125, Arg-162, Ser-190, Ile-244, and Gln-289 each bind UDP-N-acetyl-alpha-D-glucosamine.

Belongs to the glycosyltransferase 28 family. MurG subfamily.

It is found in the cell inner membrane. The catalysed reaction is di-trans,octa-cis-undecaprenyl diphospho-N-acetyl-alpha-D-muramoyl-L-alanyl-D-glutamyl-meso-2,6-diaminopimeloyl-D-alanyl-D-alanine + UDP-N-acetyl-alpha-D-glucosamine = di-trans,octa-cis-undecaprenyl diphospho-[N-acetyl-alpha-D-glucosaminyl-(1-&gt;4)]-N-acetyl-alpha-D-muramoyl-L-alanyl-D-glutamyl-meso-2,6-diaminopimeloyl-D-alanyl-D-alanine + UDP + H(+). The protein operates within cell wall biogenesis; peptidoglycan biosynthesis. Cell wall formation. Catalyzes the transfer of a GlcNAc subunit on undecaprenyl-pyrophosphoryl-MurNAc-pentapeptide (lipid intermediate I) to form undecaprenyl-pyrophosphoryl-MurNAc-(pentapeptide)GlcNAc (lipid intermediate II). The polypeptide is UDP-N-acetylglucosamine--N-acetylmuramyl-(pentapeptide) pyrophosphoryl-undecaprenol N-acetylglucosamine transferase (Neisseria meningitidis serogroup C / serotype 2a (strain ATCC 700532 / DSM 15464 / FAM18)).